Reading from the N-terminus, the 258-residue chain is Ubiquinone/menaquinone biosynthesis C-methyltransferase UbiE (258 aa).

S-adenosyl-L-methionine contacts are provided by residues threonine 81, aspartate 102, and 130–131; that span reads NA.

It belongs to the class I-like SAM-binding methyltransferase superfamily. MenG/UbiE family.

The catalysed reaction is a 2-demethylmenaquinol + S-adenosyl-L-methionine = a menaquinol + S-adenosyl-L-homocysteine + H(+). The enzyme catalyses a 2-methoxy-6-(all-trans-polyprenyl)benzene-1,4-diol + S-adenosyl-L-methionine = a 5-methoxy-2-methyl-3-(all-trans-polyprenyl)benzene-1,4-diol + S-adenosyl-L-homocysteine + H(+). It participates in quinol/quinone metabolism; menaquinone biosynthesis; menaquinol from 1,4-dihydroxy-2-naphthoate: step 2/2. It functions in the pathway cofactor biosynthesis; ubiquinone biosynthesis. Functionally, methyltransferase required for the conversion of demethylmenaquinol (DMKH2) to menaquinol (MKH2) and the conversion of 2-polyprenyl-6-methoxy-1,4-benzoquinol (DDMQH2) to 2-polyprenyl-3-methyl-6-methoxy-1,4-benzoquinol (DMQH2). The polypeptide is Ubiquinone/menaquinone biosynthesis C-methyltransferase UbiE (Rhizobium meliloti (strain 1021) (Ensifer meliloti)).